The chain runs to 145 residues: D-aminoacyl-tRNA deacylase (145 aa).

A Gly-cisPro motif, important for rejection of L-amino acids motif is present at residues 137–138; that stretch reads GP.

The protein belongs to the DTD family. As to quaternary structure, homodimer.

Its subcellular location is the cytoplasm. The catalysed reaction is glycyl-tRNA(Ala) + H2O = tRNA(Ala) + glycine + H(+). The enzyme catalyses a D-aminoacyl-tRNA + H2O = a tRNA + a D-alpha-amino acid + H(+). Its function is as follows. An aminoacyl-tRNA editing enzyme that deacylates mischarged D-aminoacyl-tRNAs. Also deacylates mischarged glycyl-tRNA(Ala), protecting cells against glycine mischarging by AlaRS. Acts via tRNA-based rather than protein-based catalysis; rejects L-amino acids rather than detecting D-amino acids in the active site. By recycling D-aminoacyl-tRNA to D-amino acids and free tRNA molecules, this enzyme counteracts the toxicity associated with the formation of D-aminoacyl-tRNA entities in vivo and helps enforce protein L-homochirality. The polypeptide is D-aminoacyl-tRNA deacylase (Shewanella baltica (strain OS195)).